The chain runs to 110 residues: Ribonuclease P protein component 4 (110 aa).

Zn(2+) contacts are provided by Cys65, Cys68, Cys94, and Cys97.

It belongs to the eukaryotic/archaeal RNase P protein component 4 family. Consists of a catalytic RNA component and at least 4-5 protein subunits. It depends on Zn(2+) as a cofactor.

It is found in the cytoplasm. The catalysed reaction is Endonucleolytic cleavage of RNA, removing 5'-extranucleotides from tRNA precursor.. Functionally, part of ribonuclease P, a protein complex that generates mature tRNA molecules by cleaving their 5'-ends. The polypeptide is Ribonuclease P protein component 4 (Methanococcus maripaludis (strain C7 / ATCC BAA-1331)).